A 154-amino-acid polypeptide reads, in one-letter code: SsrA-binding protein (154 aa).

This sequence belongs to the SmpB family.

Its subcellular location is the cytoplasm. Required for rescue of stalled ribosomes mediated by trans-translation. Binds to transfer-messenger RNA (tmRNA), required for stable association of tmRNA with ribosomes. tmRNA and SmpB together mimic tRNA shape, replacing the anticodon stem-loop with SmpB. tmRNA is encoded by the ssrA gene; the 2 termini fold to resemble tRNA(Ala) and it encodes a 'tag peptide', a short internal open reading frame. During trans-translation Ala-aminoacylated tmRNA acts like a tRNA, entering the A-site of stalled ribosomes, displacing the stalled mRNA. The ribosome then switches to translate the ORF on the tmRNA; the nascent peptide is terminated with the 'tag peptide' encoded by the tmRNA and targeted for degradation. The ribosome is freed to recommence translation, which seems to be the essential function of trans-translation. This Synechococcus sp. (strain JA-3-3Ab) (Cyanobacteria bacterium Yellowstone A-Prime) protein is SsrA-binding protein.